The primary structure comprises 493 residues: Signal recognition particle subunit SRP54 3 (493 aa).

The segment at Met1–Leu294 is G-domain. Residues Gly107 to Thr114, Asp189 to Arg193, and Thr247 to Asp250 each bind GTP. An M-domain region spans residues Gly295 to Ala493.

Belongs to the GTP-binding SRP family. SRP54 subfamily. In terms of assembly, component of a signal recognition particle (SRP) complex that consists of a 7SL RNA molecule of 300 nucleotides and six protein subunits: SRP72, SRP68, SRP54, SRP19, SRP14 and SRP9.

It is found in the cytoplasm. The protein resides in the endoplasmic reticulum. The catalysed reaction is GTP + H2O = GDP + phosphate + H(+). Its function is as follows. Component of the signal recognition particle (SRP) complex, a ribonucleoprotein complex that mediates the cotranslational targeting of secretory and membrane proteins to the endoplasmic reticulum (ER). As part of the SRP complex, associates with the SRP receptor (SR) component SRPRA to target secretory proteins to the endoplasmic reticulum membrane. Binds to the signal sequence of presecretory proteins when they emerge from the ribosomes. Displays basal GTPase activity, and stimulates reciprocal GTPase activation of the SR subunit SRPRA. Forms a guanosine 5'-triphosphate (GTP)-dependent complex with the SR subunit SRPRA. SR compaction and GTPase mediated rearrangement of SR drive SRP-mediated cotranslational protein translocation into the ER. Requires the presence of SRP9/SRP14 and/or SRP19 to stably interact with RNA. This chain is Signal recognition particle subunit SRP54 3 (SRP54-3), found in Hordeum vulgare (Barley).